The primary structure comprises 1173 residues: Fas-binding factor 1 (1173 aa).

A disordered region spans residues 17-168 (MALRTKKGLK…PSSSKTGLQY (152 aa)). Residues 46 to 56 (KPAEPASHAKD) are compositionally biased toward basic and acidic residues. Over residues 80–93 (AGADAEASSVSDAD) the composition is skewed to low complexity. Position 172 is a phosphoserine (serine 172). Disordered stretches follow at residues 180 to 225 (LAGL…GDTP) and 241 to 566 (TTLG…SSRE). Residues 206 to 216 (SPGAAAGQGPS) show a composition bias toward low complexity. Basic and acidic residues-rich tracts occupy residues 247–258 (DSPKAERKKTGD) and 287–299 (TGERREFQLDKKY). Polar residues-rich tracts occupy residues 331–345 (VASSEGRQSRRQSVS), 396–411 (SPVQKAQQEDSPMTPS), 468–477 (VISQKKSQNL), and 533–544 (TGSSMSWSQATT). Coiled coils occupy residues 617 to 742 (TAQL…QQAS), 808 to 917 (QQRE…MNKC), and 975 to 1057 (CELR…VQRQ). A Glycyl lysine isopeptide (Lys-Gly) (interchain with G-Cter in SUMO2) cross-link involves residue lysine 1002. The segment at 1091-1124 (ASLPGLPPRVQGPAASSRDAVQAPASSSPQCSQP) is disordered. A compositionally biased stretch (low complexity) spans 1110–1124 (AVQAPASSSPQCSQP).

In terms of assembly, interacts with PARD3. May interact with FAS cytoplasmic domain. Interacts with TRAPPC14. Broadly expressed.

Its subcellular location is the cytoplasm. It is found in the cytoskeleton. It localises to the microtubule organizing center. The protein resides in the centrosome. The protein localises to the centriole. Its subcellular location is the spindle pole. It is found in the cell junction. In terms of biological role, keratin-binding protein required for epithelial cell polarization. Involved in apical junction complex (AJC) assembly via its interaction with PARD3. Required for ciliogenesis. In Mus musculus (Mouse), this protein is Fas-binding factor 1 (Fbf1).